Here is a 72-residue protein sequence, read N- to C-terminus: SRY-related protein AES2 (72 aa).

Positions 1 to 69 form a DNA-binding region, HMG box; it reads VKRPMNAFMV…KHMADYPDYK (69 aa).

Its subcellular location is the nucleus. The sequence is that of SRY-related protein AES2 from Alligator mississippiensis (American alligator).